A 405-amino-acid polypeptide reads, in one-letter code: Imidazolonepropionase (405 aa).

Fe(3+) contacts are provided by histidine 70 and histidine 72. Positions 70 and 72 each coordinate Zn(2+). 4-imidazolone-5-propanoate-binding residues include arginine 79, tyrosine 142, and histidine 175. Residue tyrosine 142 participates in N-formimidoyl-L-glutamate binding. A Fe(3+)-binding site is contributed by histidine 240. Position 240 (histidine 240) interacts with Zn(2+). Glutamine 243 is a binding site for 4-imidazolone-5-propanoate. Aspartate 315 contacts Fe(3+). Residue aspartate 315 coordinates Zn(2+). Residues asparagine 317 and glycine 319 each contribute to the N-formimidoyl-L-glutamate site. 4-imidazolone-5-propanoate is bound at residue serine 320.

It belongs to the metallo-dependent hydrolases superfamily. HutI family. Zn(2+) is required as a cofactor. Requires Fe(3+) as cofactor.

It localises to the cytoplasm. It carries out the reaction 4-imidazolone-5-propanoate + H2O = N-formimidoyl-L-glutamate. It functions in the pathway amino-acid degradation; L-histidine degradation into L-glutamate; N-formimidoyl-L-glutamate from L-histidine: step 3/3. In terms of biological role, catalyzes the hydrolytic cleavage of the carbon-nitrogen bond in imidazolone-5-propanoate to yield N-formimidoyl-L-glutamate. It is the third step in the universal histidine degradation pathway. This Ruegeria sp. (strain TM1040) (Silicibacter sp.) protein is Imidazolonepropionase.